A 693-amino-acid polypeptide reads, in one-letter code: Golgin subfamily A member 6C (693 aa).

Disordered stretches follow at residues 20-71, 497-547, and 629-693; these read NKLA…DSQY, LPGE…GTEQ, and NPAD…MQDT. Positions 73-611 form a coiled coil; sequence ELAVALESSS…KLLELQELVL (539 aa). Residues 537–547 are compositionally biased toward basic and acidic residues; it reads LPKEKADGTEQ. A compositionally biased stretch (polar residues) spans 679 to 693; sequence PVQQIVQLSPVMQDT.

It belongs to the GOLGA6 family.

The chain is Golgin subfamily A member 6C (GOLGA6C) from Homo sapiens (Human).